Consider the following 117-residue polypeptide: uncharacterized protein (117 aa).

The protein resides in the plastid. It is found in the chloroplast. This is an uncharacterized protein from Chlamydomonas reinhardtii (Chlamydomonas smithii).